Here is a 267-residue protein sequence, read N- to C-terminus: Hydroxyethylthiazole kinase 2 (267 aa).

A substrate-binding site is contributed by methionine 41. ATP contacts are provided by lysine 116 and threonine 166. Residue glycine 193 participates in substrate binding.

The protein belongs to the Thz kinase family. It depends on Mg(2+) as a cofactor.

The enzyme catalyses 5-(2-hydroxyethyl)-4-methylthiazole + ATP = 4-methyl-5-(2-phosphooxyethyl)-thiazole + ADP + H(+). Its pathway is cofactor biosynthesis; thiamine diphosphate biosynthesis; 4-methyl-5-(2-phosphoethyl)-thiazole from 5-(2-hydroxyethyl)-4-methylthiazole: step 1/1. Functionally, catalyzes the phosphorylation of the hydroxyl group of 4-methyl-5-beta-hydroxyethylthiazole (THZ). The protein is Hydroxyethylthiazole kinase 2 of Streptococcus pneumoniae (strain P1031).